We begin with the raw amino-acid sequence, 941 residues long: HMG box transcription factor BBX (941 aa).

Residues 1 to 18 are compositionally biased toward basic and acidic residues; it reads MKGSNRNKDHSAEGEGVG. Disordered regions lie at residues 1–21, 39–80, 157–200, and 221–242; these read MKGSNRNKDHSAEGEGVGKRP, FSEE…EQRA, VKSP…FGMA, and TPEVSSGTCRPDVSESPELRQK. Composition is skewed to acidic residues over residues 39 to 52 and 63 to 75; these read FSEEEEEEDEEEDI and LEQDVGETEDDES. Positions 80-148 form a DNA-binding region, HMG box; the sequence is ARRPMNAFLL…AFMKANPGYK (69 aa). A compositionally biased stretch (basic and acidic residues) spans 177–191; sequence SSRDLPSPKKAKTEE. Ser243 carries the phosphoserine modification. Residues 326–370 are a coiled coil; that stretch reads GRIKELEKGKEEKEIKMEKTDETRLQKEAEFEKSAKENLRDSKEL. Residue Lys385 forms a Glycyl lysine isopeptide (Lys-Gly) (interchain with G-Cter in SUMO2) linkage. A disordered region spans residues 438 to 482; sequence IEDPAALNKPEKLKKKKKKSKMDRHGNDKSTPKKTCKKRQSSESD. Residues 449–459 are compositionally biased toward basic residues; that stretch reads KLKKKKKKSKM. Residues Ser478 and Ser485 each carry the phosphoserine modification. Composition is skewed to basic and acidic residues over residues 499–508 and 536–552; these read GIEKLGDTPR and KKMSKEKSSDTTKESRP. Disordered stretches follow at residues 499-600 and 635-677; these read GIEK…SDCH and NVDR…KKTK. Lys573 is covalently cross-linked (Glycyl lysine isopeptide (Lys-Gly) (interchain with G-Cter in SUMO2)). Residues 661-670 show a composition bias toward low complexity; that stretch reads TFSQSGTSGS. Lys696 is covalently cross-linked (Glycyl lysine isopeptide (Lys-Gly) (interchain with G-Cter in SUMO2)). A Phosphoserine modification is found at Ser704. Disordered stretches follow at residues 714-771, 803-888, and 912-941; these read PVPR…DKWS, IPSI…SSTP, and HRGQRSTPLTHDGQPKEMPQAPVLISCADQ. Residues 723–742 show a composition bias toward polar residues; sequence GNVSSEPTKTSKGPFQSQKK. Residues 743-757 are compositionally biased toward basic residues; sequence NLFHKIVSKYKHKKE. Residues 758–771 are compositionally biased toward basic and acidic residues; sequence KPNVPEKGSGDKWS. Positions 805–817 are enriched in polar residues; sequence SIFNTPEPTTTQE. Ser822 carries the post-translational modification Phosphoserine. The span at 823-834 shows a compositional bias: basic residues; it reads QKRKARKTKITH. Ser844 is subject to Phosphoserine. The segment covering 866 to 882 has biased composition (basic and acidic residues); the sequence is TETDCNDKCSHNTEVGE.

The protein resides in the nucleus. In terms of biological role, transcription factor that is necessary for cell cycle progression from G1 to S phase. The polypeptide is HMG box transcription factor BBX (BBX) (Homo sapiens (Human)).